The chain runs to 336 residues: Ankyrin repeat and SOCS box protein 1 (336 aa).

ANK repeat units follow at residues 37–69 (CDDT…RINE), 78–107 (LPCT…EVDL), 111–140 (KGQT…DPNG), 144–173 (HRST…DVDV), 192–221 (LVVC…NPDF), and 236–266 (SPGC…NLNL). One can recognise an SOCS box domain in the interval 287–336 (LQVFKEARSIPRTLLSLCRVAVRRALGKYRLHLVPSLPLPDPIKKFLLYE).

Belongs to the ankyrin SOCS box (ASB) family. As to quaternary structure, interacts with CUL5 and RNF7. Highest expression in testis, spleen, bone marrow and salivary gland.

It functions in the pathway protein modification; protein ubiquitination. Its function is as follows. Probable substrate-recognition component of a SCF-like ECS (Elongin-Cullin-SOCS-box protein) E3 ligase complex which mediates the ubiquitination and subsequent proteasomal degradation of target proteins. Mediates Notch-induced ubiquitination and degradation of TCF3/E2A and JAK2. May play a role in testis development. The sequence is that of Ankyrin repeat and SOCS box protein 1 (Asb1) from Mus musculus (Mouse).